Here is a 343-residue protein sequence, read N- to C-terminus: Replication initiation protein (343 aa).

Residues 42-61 (ERKRTKRRRGEHSTKPKCEN) are disordered.

Probably functions as an initiator for the IncI1 ColIb-P9 replicon. This Escherichia coli protein is Replication initiation protein (repZ).